Reading from the N-terminus, the 342-residue chain is Serine/threonine-protein kinase-transforming protein mos (342 aa).

Positions 63-338 constitute a Protein kinase domain; sequence VCLMHRLGSG…LLQRDLKAFR (276 aa). Residues 69 to 77 and K90 contribute to the ATP site; that span reads LGSGGFGSV. The Proton acceptor role is filled by D198.

This sequence belongs to the protein kinase superfamily. Ser/Thr protein kinase family.

The enzyme catalyses L-seryl-[protein] + ATP = O-phospho-L-seryl-[protein] + ADP + H(+). It carries out the reaction L-threonyl-[protein] + ATP = O-phospho-L-threonyl-[protein] + ADP + H(+). The sequence is that of Serine/threonine-protein kinase-transforming protein mos (V-MOS) from Myeloproliferative sarcoma virus (isolate ts159).